Here is a 757-residue protein sequence, read N- to C-terminus: Probable tRNA (uracil-O(2)-)-methyltransferase (757 aa).

Disordered stretches follow at residues 55 to 93 (EARG…GPEQ) and 108 to 138 (QQEE…GDFP). Over residues 72–84 (PGPGQGSPGGGPG) the composition is skewed to gly residues. The residue at position 78 (S78) is a Phosphoserine. Over residues 123–136 (DSGHPGHAEGREGD) the composition is skewed to basic and acidic residues. At S533 the chain carries Phosphoserine. A C3H1-type zinc finger spans residues 713 to 743 (ACKTRLCWFFMHHPDGCALSTDCCPFAHGPA).

Belongs to the TRM44 family.

It localises to the cytoplasm. It carries out the reaction uridine(44) in tRNA(Ser) + S-adenosyl-L-methionine = 2'-O-methyluridine(44) in tRNA(Ser) + S-adenosyl-L-homocysteine + H(+). In terms of biological role, probable adenosyl-L-methionine (AdoMet)-dependent tRNA (uracil-O(2)-)-methyltransferase. In Homo sapiens (Human), this protein is Probable tRNA (uracil-O(2)-)-methyltransferase (TRMT44).